A 365-amino-acid polypeptide reads, in one-letter code: L-lactate oxidase (365 aa).

An FMN hydroxy acid dehydrogenase domain is found at 6–365 (RIPPGVWNAI…ITHDTLTPSC (360 aa)). Pyruvate is bound at residue tyrosine 32. FMN-binding positions include 85-87 (PVA), serine 114, and glutamine 135. Tyrosine 137 lines the pyruvate pocket. FMN-binding residues include threonine 163, lysine 237, and serine 259. 2 residues coordinate pyruvate: histidine 261 and arginine 264. Histidine 261 (proton acceptor) is an active-site residue. Residues 292–296 (DGGVR) and arginine 316 contribute to the FMN site.

Belongs to the FMN-dependent alpha-hydroxy acid dehydrogenase family. As to quaternary structure, homotetramer. FMN serves as cofactor.

The enzyme catalyses (S)-lactate + O2 = pyruvate + H2O2. The catalysed reaction is glycolate + O2 = glyoxylate + H2O2. Its function is as follows. Catalyzes the oxidation of (S)-lactate (L-lactate) to pyruvate, with a reduction of O2 to H2O2. To a lesser extent is also able to use glycolate as substrate. This is L-lactate oxidase from Alicycliphilus denitrificans (strain DSM 14773 / CIP 107495 / K601).